Consider the following 129-residue polypeptide: Replication initiation control protein YabA (129 aa).

The segment at 52–71 (LSLTDEATPEPKAETEAEHG) is disordered. Over residues 60 to 71 (PEPKAETEAEHG) the composition is skewed to basic and acidic residues. Residues His-103, Cys-105, Cys-119, and Cys-122 each contribute to the Zn(2+) site.

Belongs to the YabA family. As to quaternary structure, homotetramer. Interacts with both DnaA and DnaN, acting as a bridge between these two proteins. Zn(2+) serves as cofactor.

It is found in the cytoplasm. The protein resides in the nucleoid. Functionally, involved in control of chromosome replication initiation. Inhibits the cooperative binding of DnaA to the oriC region, thus negatively regulating initiation of chromosome replication. Inhibits the ability of DnaA-ATP to form a helix on DNA; does not disassemble preformed DnaA-DNA helices. Decreases the residence time of DnaA on the chromosome at its binding sites (oriC, replication forks and promoter-binding sites). Tethers DnaA to the replication machinery via the DNA polymerase beta sliding clamp subunit (dnaN). Associates with oriC and other DnaA targets on the chromosome in a DnaA-dependent manner. The polypeptide is Replication initiation control protein YabA (Listeria monocytogenes serotype 4a (strain HCC23)).